Consider the following 353-residue polypeptide: Protein RecA (353 aa).

Residue 73-80 (GPESSGKT) participates in ATP binding.

The protein belongs to the RecA family.

It localises to the cytoplasm. Can catalyze the hydrolysis of ATP in the presence of single-stranded DNA, the ATP-dependent uptake of single-stranded DNA by duplex DNA, and the ATP-dependent hybridization of homologous single-stranded DNAs. It interacts with LexA causing its activation and leading to its autocatalytic cleavage. This chain is Protein RecA, found in Bordetella avium (strain 197N).